The chain runs to 144 residues: Large ribosomal subunit protein uL15 (144 aa).

The tract at residues 20-49 is disordered; that stretch reads GRGIGSGLGKTGGRGHKGQKSRSGGFHKVG. Over residues 21 to 31 the composition is skewed to gly residues; that stretch reads RGIGSGLGKTG.

This sequence belongs to the universal ribosomal protein uL15 family. As to quaternary structure, part of the 50S ribosomal subunit.

Binds to the 23S rRNA. The polypeptide is Large ribosomal subunit protein uL15 (Neisseria gonorrhoeae (strain ATCC 700825 / FA 1090)).